Consider the following 357-residue polypeptide: MSDQQTCVIDNGSGVVKAGFAGEDAPRAVFPSIVGRPKNVSALIGVDSASEYLGDEAQQKRGVLKIWNHTFYVELRVQPDEHPILLTEAPLSPKTNREKMTQIMFETFNVPALYVAIQAVLSLYSRGRTTGIVCDAGDGVTHTVPIYEGFSIPHAVSRIQLAGRDLTTFLAKLLTERGYNFTSSAELEIVRDIKEKLCFVALNYESALKQSHDSSQFEKNYELPDGKVITIGSERFRCPEYLFKPLEMNGRELDSIQDLTYKSIQECDVDVRRDLYQNIILSGGTTMYEGIGERLLKEIENRAPKSINVKVIASPDRRFAVWRGGSTLTSLSTFASMWITKEDYDENGASIVHRKCI.

It belongs to the actin family. Post-translationally, met-1 may be removed after translation.

The protein localises to the cytoplasm. It is found in the cytoskeleton. It carries out the reaction ATP + H2O = ADP + phosphate + H(+). Functionally, actins are highly conserved proteins that are involved in various types of cell motility and are ubiquitously expressed in all eukaryotic cells. In Oxytricha fallax, this protein is Actin, cytoplasmic.